Reading from the N-terminus, the 240-residue chain is LOB domain-containing protein 39 (240 aa).

In terms of domain architecture, LOB spans 1-107; it reads MSCNGCRVLR…VETVLRGGTL (107 aa). Residues 200–233 form a disordered region; the sequence is GDRPGSPSEESVTTSCWENGMRGDNKQKRNKGEK. Residues 207–216 are compositionally biased toward polar residues; it reads SEESVTTSCW.

It belongs to the LOB domain-containing protein family. In terms of tissue distribution, expressed in young shoots, roots, stems, leaves and flowers.

The protein is LOB domain-containing protein 39 (LBD39) of Arabidopsis thaliana (Mouse-ear cress).